A 387-amino-acid polypeptide reads, in one-letter code: 1-deoxy-D-xylulose 5-phosphate reductoisomerase (387 aa).

Thr-10, Gly-11, Ser-12, Ile-13, Gly-36, Lys-37, Asn-38, and Asn-123 together coordinate NADPH. Lys-124 contacts 1-deoxy-D-xylulose 5-phosphate. Residue Glu-125 participates in NADPH binding. Mn(2+) is bound at residue Asp-149. Positions 150, 151, 175, and 198 each coordinate 1-deoxy-D-xylulose 5-phosphate. Residue Glu-151 participates in Mn(2+) binding. Gly-204 lines the NADPH pocket. The 1-deoxy-D-xylulose 5-phosphate site is built by Ser-211, Asn-216, Lys-217, and Glu-220. Glu-220 contacts Mn(2+).

This sequence belongs to the DXR family. The cofactor is Mg(2+). Mn(2+) serves as cofactor.

The catalysed reaction is 2-C-methyl-D-erythritol 4-phosphate + NADP(+) = 1-deoxy-D-xylulose 5-phosphate + NADPH + H(+). It participates in isoprenoid biosynthesis; isopentenyl diphosphate biosynthesis via DXP pathway; isopentenyl diphosphate from 1-deoxy-D-xylulose 5-phosphate: step 1/6. Catalyzes the NADPH-dependent rearrangement and reduction of 1-deoxy-D-xylulose-5-phosphate (DXP) to 2-C-methyl-D-erythritol 4-phosphate (MEP). This is 1-deoxy-D-xylulose 5-phosphate reductoisomerase from Pelotomaculum thermopropionicum (strain DSM 13744 / JCM 10971 / SI).